The primary structure comprises 336 residues: Pyridoxal 5'-phosphate synthase subunit PdxS (336 aa).

Asp62 is a binding site for D-ribose 5-phosphate. Residue Lys119 is the Schiff-base intermediate with D-ribose 5-phosphate of the active site. D-ribose 5-phosphate is bound at residue Gly191. A D-glyceraldehyde 3-phosphate-binding site is contributed by Lys203. Residues Gly254 and 275 to 276 (GS) each bind D-ribose 5-phosphate.

It belongs to the PdxS/SNZ family. In the presence of PdxT, forms a dodecamer of heterodimers.

It carries out the reaction aldehydo-D-ribose 5-phosphate + D-glyceraldehyde 3-phosphate + L-glutamine = pyridoxal 5'-phosphate + L-glutamate + phosphate + 3 H2O + H(+). It participates in cofactor biosynthesis; pyridoxal 5'-phosphate biosynthesis. Its function is as follows. Catalyzes the formation of pyridoxal 5'-phosphate from ribose 5-phosphate (RBP), glyceraldehyde 3-phosphate (G3P) and ammonia. The ammonia is provided by the PdxT subunit. Can also use ribulose 5-phosphate and dihydroxyacetone phosphate as substrates, resulting from enzyme-catalyzed isomerization of RBP and G3P, respectively. In Pyrobaculum calidifontis (strain DSM 21063 / JCM 11548 / VA1), this protein is Pyridoxal 5'-phosphate synthase subunit PdxS.